Consider the following 322-residue polypeptide: tRNA-dihydrouridine synthase B (322 aa).

FMN contacts are provided by residues 16–18 (PMA) and Gln70. Catalysis depends on Cys100, which acts as the Proton donor. Residues Lys139, 200–202 (NGD), and 224–225 (GR) contribute to the FMN site.

Belongs to the Dus family. DusB subfamily. It depends on FMN as a cofactor.

It catalyses the reaction a 5,6-dihydrouridine in tRNA + NAD(+) = a uridine in tRNA + NADH + H(+). The catalysed reaction is a 5,6-dihydrouridine in tRNA + NADP(+) = a uridine in tRNA + NADPH + H(+). Catalyzes the synthesis of 5,6-dihydrouridine (D), a modified base found in the D-loop of most tRNAs, via the reduction of the C5-C6 double bond in target uridines. The protein is tRNA-dihydrouridine synthase B of Shewanella oneidensis (strain ATCC 700550 / JCM 31522 / CIP 106686 / LMG 19005 / NCIMB 14063 / MR-1).